The following is a 148-amino-acid chain: uncharacterized protein (148 aa).

The protein to A.tumefaciens Atu0565/AGR_C_992.

This is an uncharacterized protein from Rhizobium meliloti (strain 1021) (Ensifer meliloti).